Here is a 291-residue protein sequence, read N- to C-terminus: 4-hydroxy-tetrahydrodipicolinate synthase (291 aa).

T44 provides a ligand contact to pyruvate. The Proton donor/acceptor role is filled by Y132. The active-site Schiff-base intermediate with substrate is the K161. I202 contacts pyruvate.

The protein belongs to the DapA family. In terms of assembly, homotetramer; dimer of dimers.

Its subcellular location is the cytoplasm. It carries out the reaction L-aspartate 4-semialdehyde + pyruvate = (2S,4S)-4-hydroxy-2,3,4,5-tetrahydrodipicolinate + H2O + H(+). Its pathway is amino-acid biosynthesis; L-lysine biosynthesis via DAP pathway; (S)-tetrahydrodipicolinate from L-aspartate: step 3/4. Its function is as follows. Catalyzes the condensation of (S)-aspartate-beta-semialdehyde [(S)-ASA] and pyruvate to 4-hydroxy-tetrahydrodipicolinate (HTPA). The protein is 4-hydroxy-tetrahydrodipicolinate synthase of Endomicrobium trichonymphae.